The following is a 684-amino-acid chain: Cleavage and polyadenylation specificity factor subunit 3 (684 aa).

An N-acetylserine modification is found at Ser2. 6 residues coordinate Zn(2+): His71, His73, Asp75, His76, His158, and Asp179. Catalysis depends on His396, which acts as the Proton donor. His418 provides a ligand contact to Zn(2+). Glycyl lysine isopeptide (Lys-Gly) (interchain with G-Cter in SUMO) cross-links involve residues Lys462, Lys465, and Lys545. Position 659 is a phosphoserine (Ser659). Thr681 bears the Phosphothreonine mark.

It belongs to the metallo-beta-lactamase superfamily. RNA-metabolizing metallo-beta-lactamase-like family. CPSF3 subfamily. Component of the cleavage and polyadenylation specificity factor (CPSF) complex, composed of CPSF1, CPSF2, CPSF3, CPSF4 and FIP1L1. Interacts with CPSF2, CSTF2 and SYMPK. Interacts with TUT1; the interaction is direct and mediates the recruitment of the CPSF complex on the 3'UTR of pre-mRNAs. Interacts with WDR33. Interacts with ZC3H3. Interacts with ISY1; this interaction is in an RNA independent manner. Interacts with the microprocessor complex subunits DGCR8 and DROSHA; this interaction is in an RNA dependent manner. Requires Zn(2+) as cofactor. Post-translationally, sumoylated on Lys-462, Lys-465 and Lys-545, preferentially by SUMO3.

Its subcellular location is the nucleus. Component of the cleavage and polyadenylation specificity factor (CPSF) complex that plays a key role in pre-mRNA 3'-end formation, recognizing the AAUAAA signal sequence and interacting with poly(A) polymerase and other factors to bring about cleavage and poly(A) addition. Has endonuclease activity, and functions as an mRNA 3'-end-processing endonuclease. Also involved in the histone 3'-end pre-mRNA processing. U7 snRNP-dependent protein that induces both the 3' endoribonucleolytic cleavage of histone pre-mRNAs and acts as a 5' to 3' exonuclease for degrading the subsequent downstream cleavage product (DCP) of mature histone mRNAs. Cleavage occurs after the 5'-ACCCA-3' sequence in the histone pre-mRNA leaving a 3'hydroxyl group on the upstream fragment containing the stem loop (SL) and 5' phosphate on the downstream cleavage product (DCP) starting with CU nucleotides. The U7-dependent 5' to 3' exonuclease activity is processive and degrades the DCP RNA substrate even after complete removal of the U7-binding site. Binds to the downstream cleavage product (DCP) of histone pre-mRNAs and the cleaved DCP RNA substrate in a U7 snRNP dependent manner. Required for the selective processing of microRNAs (miRNAs) during embryonic stem cell differentiation via its interaction with ISY1. Required for entering/progressing through S-phase of the cell cycle. Required for the biogenesis of all miRNAs from the pri-miR-17-92 primary transcript except miR-92a. Only required for the biogenesis of miR-290 and miR-96 from the pri-miR-290-295 and pri-miR-96-183 primary transcripts, respectively. The sequence is that of Cleavage and polyadenylation specificity factor subunit 3 (Cpsf3) from Mus musculus (Mouse).